Consider the following 1430-residue polypeptide: Caskin-1 (1430 aa).

ANK repeat units lie at residues 48–77 (DGFS…AVDI), 81–110 (KGMR…AVNV), 114–143 (EGHI…NPCI), 147–176 (SGKT…CAAL), 188–217 (NGTS…DINR), and 220–249 (KSGT…NAQV). Residue Tyr-253 is modified to Phosphotyrosine. An SH3 domain is found at 281 to 347 (SAALQVRATK…PSSLGEAIVK (67 aa)). Residues 348–372 (RAGSRTGSEPSPPQGGGSLGPSAPP) form a disordered region. Ser-358 is subject to Phosphoserine. Residues 375 to 471 (IWVLRKPFAG…PKKLESSSAS (97 aa)) are CASK-binding. At Arg-398 the chain carries Omega-N-methylarginine. Residues 421 to 430 (QKSVSESSPG) show a composition bias toward polar residues. The disordered stretch occupies residues 421–472 (QKSVSESSPGDSPVKPPEGSSGAARSQPPAAHAGQVYGEQPPKKLESSSASE). A phosphoserine mark is found at Ser-423 and Ser-432. SAM domains lie at 474 to 537 (KSAE…LNIP) and 543 to 607 (HKPA…LAEL). A phosphoserine mark is found at Ser-635 and Ser-648. The span at 667–679 (LSGPAEAGAAAAE) shows a compositional bias: low complexity. Disordered regions lie at residues 667-1001 (LSGP…SAGS), 1015-1040 (GGGG…DPGR), 1055-1371 (GPDG…RQKL), and 1388-1407 (KIRQ…EKST). The segment covering 683–711 (NHLPATPRTTSRQESSLSGRARHMSSSQE) has biased composition (polar residues). Residues Ser-722 and Ser-727 each carry the phosphoserine modification. Residue Thr-740 is modified to Phosphothreonine. Residue Ser-790 is modified to Phosphoserine. Over residues 847–859 (PPAPGPVPPPVPA) the composition is skewed to pro residues. A phosphoserine mark is found at Ser-890, Ser-892, and Ser-988. Positions 1027-1036 (GHPTPRPASP) are enriched in pro residues. The residue at position 1066 (Thr-1066) is a Phosphothreonine. Position 1068 is a phosphoserine (Ser-1068). Residues 1147-1159 (DTVKRRPKAKEPD) are compositionally biased toward basic and acidic residues. Positions 1190 to 1214 (PELPPPPPPAEPPPTDLMPLPPLPL) are enriched in pro residues. Ser-1258 is subject to Phosphoserine. Thr-1267 bears the Phosphothreonine mark. Residues 1267-1282 (TPPPVSPKPPPPPTAP) show a composition bias toward pro residues. 3 stretches are compositionally biased toward low complexity: residues 1283-1298 (KPAK…SATP), 1308-1326 (PPAA…SASP), and 1344-1358 (PRAA…PVAS). A Phosphoserine modification is found at Ser-1362. Residues 1388–1406 (KIRQEDGQGPRPSSIEEKS) are compositionally biased toward basic and acidic residues.

In terms of assembly, polymerizes, via the tandem SAM domains, to form long, 8 nM wide fibers, upon which other proteins can assemble. Binds the CaM kinase domain of CASK. Forms a ternary complex with CASK and LIN7A, LIN7B or LIN7C. Competes with APBA1 that forms a similar complex with CASK and LIN7 proteins. The tripartite complex CASKIN1/CASK/LIN7(A/B/C) binds the cytoplasmic tail of NRXN1. As to expression, expressed in brain. Localized primarily to the neuropil and enriched in synaptic areas (at protein level).

It is found in the cytoplasm. Its function is as follows. May link the scaffolding protein CASK to downstream intracellular effectors. The polypeptide is Caskin-1 (Caskin1) (Rattus norvegicus (Rat)).